The primary structure comprises 115 residues: Large ribosomal subunit protein bL20 (115 aa).

The protein belongs to the bacterial ribosomal protein bL20 family.

Binds directly to 23S ribosomal RNA and is necessary for the in vitro assembly process of the 50S ribosomal subunit. It is not involved in the protein synthesizing functions of that subunit. The polypeptide is Large ribosomal subunit protein bL20 (Chlorobaculum tepidum (strain ATCC 49652 / DSM 12025 / NBRC 103806 / TLS) (Chlorobium tepidum)).